A 227-amino-acid polypeptide reads, in one-letter code: MTQQGDAVAGELATEKVGIKGYLAFFLTIIFFSGVFSGTDSWWRVFDFSVLNGSFGQLPGANGATTSFRGAGGAGAKDGFLFALELAPSVILSLGIISITDGLGGLRAAQQLMTPVLKPLLGIPGICSLALIANLQNTDAAAGMTKELAQEGEITERDKVIFAAYQTSGSAIITNYFSSGVAVFAFLGTSVIVPLAVILVFKFVGANILRVWLNFEERRNPTQGAQA.

The next 4 membrane-spanning stretches (helical) occupy residues 17–37 (VGIK…GVFS), 79–99 (GFLF…IISI), 112–132 (LMTP…LALI), and 181–201 (VAVF…ILVF).

The protein localises to the cell membrane. This is an uncharacterized protein from Escherichia coli (strain K12).